The chain runs to 333 residues: Global transcription regulator sge1 (333 aa).

Disordered stretches follow at residues 93–139 (PPGE…PSVP) and 241–307 (QHQS…PQYQ).

The protein belongs to the MIT1/WOR1 family.

The protein resides in the nucleus. Global transcriptional regulator that acts as an activator of secondary metabolism. Required for expression of a yet uncharacterized secondary metabolism gene cluster containing a non-canonical non-ribosomal peptide synthetase. Not required for conidiogenesis nor for pathogenicity, but is involved in vegetative growth. The polypeptide is Global transcription regulator sge1 (Gibberella fujikuroi (strain CBS 195.34 / IMI 58289 / NRRL A-6831) (Bakanae and foot rot disease fungus)).